We begin with the raw amino-acid sequence, 719 residues long: Glutathionylspermidine synthase (719 aa).

Residues 54-200 form the Peptidase C51 domain; that stretch reads CLPLSSFERK…TESGEVELLD (147 aa). Residue R350 participates in glutathione binding. 350-352 provides a ligand contact to ATP; that stretch reads RFD. Mg(2+) is bound by residues D352, E364, and N366. Position 369 (S369) interacts with glutathione. Position 432 (E432) interacts with spermidine. Positions 433 and 501 each coordinate glutathione. ATP-binding positions include K544, K579, G586, Q653, and 689 to 691; that span reads KIT.

It in the C-terminal section; belongs to the glutathionylspermidine synthase preATP-grasp family. Mg(2+) is required as a cofactor. The N-terminus is blocked.

It catalyses the reaction spermidine + glutathione + ATP = glutathionylspermidine + ADP + phosphate + H(+). Its function is as follows. Conjugates glutathione (gamma-Glu-Cys-Gly) and spermidine to form glutathionylspermidine in the biosynthesis trypanothione (N(1),N(8)-bis(glutathionyl)spermidine), which is involved in maintaining intracellular thiol redox and in defense against oxidants. The polypeptide is Glutathionylspermidine synthase (GSP) (Crithidia fasciculata).